A 394-amino-acid chain; its full sequence is Histidinol dehydrogenase (394 aa).

NAD(+) is bound by residues Tyr-113, Gln-172, and Asn-195. Residues Thr-218, Gln-240, and His-243 each contribute to the substrate site. Positions 240 and 243 each coordinate Zn(2+). Active-site proton acceptor residues include Glu-294 and His-295. Positions 295, 327, 380, and 385 each coordinate substrate. Asp-327 contributes to the Zn(2+) binding site. His-385 contacts Zn(2+).

This sequence belongs to the histidinol dehydrogenase family. Zn(2+) is required as a cofactor.

The catalysed reaction is L-histidinol + 2 NAD(+) + H2O = L-histidine + 2 NADH + 3 H(+). The protein operates within amino-acid biosynthesis; L-histidine biosynthesis; L-histidine from 5-phospho-alpha-D-ribose 1-diphosphate: step 9/9. Its function is as follows. Catalyzes the sequential NAD-dependent oxidations of L-histidinol to L-histidinaldehyde and then to L-histidine. This Sulfurisphaera tokodaii (strain DSM 16993 / JCM 10545 / NBRC 100140 / 7) (Sulfolobus tokodaii) protein is Histidinol dehydrogenase.